The primary structure comprises 156 residues: 6,7-dimethyl-8-ribityllumazine synthase (156 aa).

5-amino-6-(D-ribitylamino)uracil-binding positions include Phe-22, 56–58 (AFE), and 80–82 (VVI). 85-86 (ST) contributes to the (2S)-2-hydroxy-3-oxobutyl phosphate binding site. His-88 acts as the Proton donor in catalysis. Residue Phe-113 coordinates 5-amino-6-(D-ribitylamino)uracil. Residue Arg-127 participates in (2S)-2-hydroxy-3-oxobutyl phosphate binding.

Belongs to the DMRL synthase family.

It catalyses the reaction (2S)-2-hydroxy-3-oxobutyl phosphate + 5-amino-6-(D-ribitylamino)uracil = 6,7-dimethyl-8-(1-D-ribityl)lumazine + phosphate + 2 H2O + H(+). It participates in cofactor biosynthesis; riboflavin biosynthesis; riboflavin from 2-hydroxy-3-oxobutyl phosphate and 5-amino-6-(D-ribitylamino)uracil: step 1/2. Its function is as follows. Catalyzes the formation of 6,7-dimethyl-8-ribityllumazine by condensation of 5-amino-6-(D-ribitylamino)uracil with 3,4-dihydroxy-2-butanone 4-phosphate. This is the penultimate step in the biosynthesis of riboflavin. In Streptococcus agalactiae serotype Ia (strain ATCC 27591 / A909 / CDC SS700), this protein is 6,7-dimethyl-8-ribityllumazine synthase.